A 918-amino-acid chain; its full sequence is Cell surface glycoprotein 1 (918 aa).

The N-terminal stretch at 1 to 34 is a signal peptide; it reads MTDTNEKIRSLFLTALMVFSVFAGTIAFSGGAAA. Residues asparagine 37, asparagine 56, asparagine 110, asparagine 219, asparagine 250, asparagine 261, and asparagine 291 are each glycosylated (N-linked (GlcNAc...) asparagine). N-linked (GalNAc...) asparagine glycosylation is present at asparagine 306. N-linked (GlcNAc...) asparagine glycosylation is found at asparagine 318, asparagine 343, asparagine 392, asparagine 434, asparagine 487, asparagine 541, asparagine 555, asparagine 572, asparagine 585, asparagine 614, asparagine 715, asparagine 776, asparagine 836, and asparagine 845. Residues 815 to 894 form a disordered region; it reads HQDTNGNEAY…DESETTAAEG (80 aa). Residues 833-846 show a composition bias toward polar residues; it reads YTQNGSAVTDSANV. Acidic residues predominate over residues 849–875; sequence VEEEQTEAPDTETETEAPDTETEEETD. The chain crosses the membrane as a helical span at residues 894–914; the sequence is GPGFTAAIALIALVAAALLAV. A PGF sorting signal motif is present at residues 895 to 897; that stretch reads PGF.

This sequence belongs to the halobacterial S-layer protein family. N-glycosylated on Asn-306; this N-linked glycan is a branched trisaccharide containing 2-amino-6-sulfo-2,6-dideoxy-glucose (sulfoquinovosamine). In terms of processing, cleaved by the archaeosortase ArtA at the C-terminus, with removal of a short hydrophobic segment. Post-translationally, lipidation.

Its subcellular location is the secreted. It is found in the cell wall. The protein localises to the S-layer. It localises to the cell membrane. S-layer protein. The S-layer is a paracrystalline mono-layered assembly of proteins which coat the surface of the cell. In H.hispanica, the S-layer contains two different glycoproteins, Slg1 and Slg2, which share highly similar amino acid sequences. The chain is Cell surface glycoprotein 1 from Haloarcula hispanica (strain ATCC 33960 / DSM 4426 / JCM 8911 / NBRC 102182 / NCIMB 2187 / VKM B-1755).